The sequence spans 423 residues: CinA-like protein (423 aa).

The protein belongs to the CinA family.

This is CinA-like protein from Desulforapulum autotrophicum (strain ATCC 43914 / DSM 3382 / VKM B-1955 / HRM2) (Desulfobacterium autotrophicum).